We begin with the raw amino-acid sequence, 152 residues long: Aspartate carbamoyltransferase regulatory chain (152 aa).

Residues C109, C114, C138, and C141 each coordinate Zn(2+).

The protein belongs to the PyrI family. Contains catalytic and regulatory chains. Zn(2+) is required as a cofactor.

Its function is as follows. Involved in allosteric regulation of aspartate carbamoyltransferase. The protein is Aspartate carbamoyltransferase regulatory chain of Proteus mirabilis (strain HI4320).